A 620-amino-acid polypeptide reads, in one-letter code: Glutathione-regulated potassium-efflux system protein KefC (620 aa).

The next 12 membrane-spanning stretches (helical) occupy residues 4-24 (HTLV…PIAV), 26-46 (LGLG…PWGL), 54-74 (SILH…GLEL), 90-110 (GALQ…LLGL), 114-134 (VAEL…MQAM), 149-169 (FAVL…IPLL), 178-198 (MGAF…VVLL), 218-238 (VFSA…EEVG), 270-290 (GLLL…GTLL), 294-314 (LRIV…LWLI), 327-347 (WFAV…GAAQ), and 359-379 (SLTL…VILN). One can recognise an RCK N-terminal domain in the interval 399–518 (QPRVIIAGFG…AGVEKPERET (120 aa)). The interval 597 to 620 (GWQGTEEGKHTGNMADEPETKPSS) is disordered.

The protein belongs to the monovalent cation:proton antiporter 2 (CPA2) transporter (TC 2.A.37) family. KefC subfamily. As to quaternary structure, homodimer. Interacts with the regulatory subunit KefF.

The protein localises to the cell inner membrane. Its function is as follows. Pore-forming subunit of a potassium efflux system that confers protection against electrophiles. Catalyzes K(+)/H(+) antiport. This is Glutathione-regulated potassium-efflux system protein KefC from Escherichia coli O139:H28 (strain E24377A / ETEC).